Reading from the N-terminus, the 338-residue chain is S-adenosylmethionine:tRNA ribosyltransferase-isomerase (338 aa).

The protein belongs to the QueA family. Monomer.

It is found in the cytoplasm. The catalysed reaction is 7-aminomethyl-7-carbaguanosine(34) in tRNA + S-adenosyl-L-methionine = epoxyqueuosine(34) in tRNA + adenine + L-methionine + 2 H(+). The protein operates within tRNA modification; tRNA-queuosine biosynthesis. Transfers and isomerizes the ribose moiety from AdoMet to the 7-aminomethyl group of 7-deazaguanine (preQ1-tRNA) to give epoxyqueuosine (oQ-tRNA). This Francisella tularensis subsp. novicida (strain U112) protein is S-adenosylmethionine:tRNA ribosyltransferase-isomerase.